The chain runs to 149 residues: Large ribosomal subunit protein bL9 (149 aa).

It belongs to the bacterial ribosomal protein bL9 family.

Its function is as follows. Binds to the 23S rRNA. The protein is Large ribosomal subunit protein bL9 of Anaeromyxobacter dehalogenans (strain 2CP-1 / ATCC BAA-258).